The following is a 216-amino-acid chain: DNA-directed RNA polymerase subunit alpha (216 aa).

Belongs to the RNA polymerase alpha chain family. In plastids the minimal PEP RNA polymerase catalytic core is composed of four subunits: alpha, beta, beta', and beta''. When a (nuclear-encoded) sigma factor is associated with the core the holoenzyme is formed, which can initiate transcription.

It localises to the plastid. The protein resides in the chloroplast. The catalysed reaction is RNA(n) + a ribonucleoside 5'-triphosphate = RNA(n+1) + diphosphate. Its function is as follows. DNA-dependent RNA polymerase catalyzes the transcription of DNA into RNA using the four ribonucleoside triphosphates as substrates. The protein is DNA-directed RNA polymerase subunit alpha (rpoA) of Euglena granulata.